We begin with the raw amino-acid sequence, 265 residues long: Hydroxyethylthiazole kinase (265 aa).

Methionine 36 serves as a coordination point for substrate. ATP contacts are provided by lysine 112 and serine 160. Residue glycine 187 coordinates substrate.

It belongs to the Thz kinase family. Mg(2+) serves as cofactor.

The catalysed reaction is 5-(2-hydroxyethyl)-4-methylthiazole + ATP = 4-methyl-5-(2-phosphooxyethyl)-thiazole + ADP + H(+). The protein operates within cofactor biosynthesis; thiamine diphosphate biosynthesis; 4-methyl-5-(2-phosphoethyl)-thiazole from 5-(2-hydroxyethyl)-4-methylthiazole: step 1/1. Functionally, catalyzes the phosphorylation of the hydroxyl group of 4-methyl-5-beta-hydroxyethylthiazole (THZ). The chain is Hydroxyethylthiazole kinase from Clostridium perfringens (strain SM101 / Type A).